We begin with the raw amino-acid sequence, 408 residues long: GTPase Obg (408 aa).

Residues 1–159 (MKFVDEVSIR…RDLKMEMKVL (159 aa)) enclose the Obg domain. The interval 127 to 150 (NTRFKSSTNRAPRQTTPGKPGDQR) is disordered. Over residues 129-143 (RFKSSTNRAPRQTTP) the composition is skewed to polar residues. Positions 160-333 (ADVGLLGLPN…LSHDLMRYLE (174 aa)) constitute an OBG-type G domain. GTP-binding positions include 166–173 (GLPNAGKS), 191–195 (FTTLV), 213–216 (DIPG), 283–286 (NKSD), and 314–316 (SAI). Positions 173 and 193 each coordinate Mg(2+). A disordered region spans residues 382 to 408 (HDIGDDDGWDDDFEDDEDGPEIIYVRD). Over residues 385 to 401 (GDDDGWDDDFEDDEDGP) the composition is skewed to acidic residues.

The protein belongs to the TRAFAC class OBG-HflX-like GTPase superfamily. OBG GTPase family. Monomer. Mg(2+) serves as cofactor.

The protein localises to the cytoplasm. Its function is as follows. An essential GTPase which binds GTP, GDP and possibly (p)ppGpp with moderate affinity, with high nucleotide exchange rates and a fairly low GTP hydrolysis rate. Plays a role in control of the cell cycle, stress response, ribosome biogenesis and in those bacteria that undergo differentiation, in morphogenesis control. The polypeptide is GTPase Obg (Pseudomonas putida (strain GB-1)).